The sequence spans 234 residues: Mitochondrial assembly of ribosomal large subunit protein 1 (234 aa).

The interval 63–88 (SEPGLEERAEGTVNEGRPESDAADHT) is disordered.

It belongs to the Iojap/RsfS family. In terms of assembly, associates with the mitochondrial ribosome large subunit (39S) via interaction with MRPL12 and/or MRPL14. The interaction generates steric hindrance that is expected to prevent premature association of the 28S and 39S ribosomal subunits. Interacts with intermediates of the mitochondrial ribosome large subunit (mt-LSU) (recruits the mitochondrial ribosome and complex I assembly factor AltMIEF1 and NDUFAB1); regulates mitochondrial ribosomes assembly. Interacts with MRPL12 and MRPL14.

It is found in the mitochondrion matrix. Functionally, required for normal mitochondrial ribosome function and mitochondrial translation. May play a role in ribosome biogenesis by preventing premature association of the 28S and 39S ribosomal subunits. Interacts with mitochondrial ribosomal protein uL14m (MRPL14), probably blocking formation of intersubunit bridge B8, preventing association of the 28S and 39S ribosomal subunits. Addition to isolated mitochondrial ribosomal subunits partially inhibits translation, probably by interfering with the association of the 28S and 39S ribosomal subunits and the formation of functional ribosomes. May also participate in the assembly and/or regulation of the stability of the large subunit of the mitochondrial ribosome. May function as a ribosomal silencing factor. The polypeptide is Mitochondrial assembly of ribosomal large subunit protein 1 (MALSU1) (Homo sapiens (Human)).